We begin with the raw amino-acid sequence, 73 residues long: Conotoxin Gla(3)-TxVI (73 aa).

An N-terminal signal peptide occupies residues 1–19 (MQKLIILLLVAAVLMSAQA). The propeptide occupies 20 to 44 (VLQEKRPKEKIKFLSKRKTDAEKQQ). 3 cysteine pairs are disulfide-bonded: Cys48-Cys62, Cys55-Cys66, and Cys61-Cys71. 4-hydroxyproline is present on Pro49. The residue at position 53 (Glu53) is a 4-carboxyglutamate; partial. 4-hydroxyproline is present on Pro54. Glu60 carries the 4-carboxyglutamate modification. Position 64 is a 6'-bromotryptophan (Trp64).

This sequence belongs to the conotoxin O2 superfamily. Expressed by the venom duct.

The protein resides in the secreted. This Conus textile (Cloth-of-gold cone) protein is Conotoxin Gla(3)-TxVI.